The sequence spans 237 residues: Coat protein (237 aa).

The tract at residues 1-28 (MSAPASTTQATGSTTSTTTKTAGATPAT) is disordered.

This sequence belongs to the potexvirus capsid protein family.

Its subcellular location is the virion. Its function is as follows. Required for genome encapsidation. Forms ribonucleoprotein complexes along with TGB1 helicase and viral RNA. The polypeptide is Coat protein (Brassica campestris (Field mustard)).